A 70-amino-acid chain; its full sequence is Conotoxin Im23.4 (70 aa).

Positions 1 to 22 (MIMRMTLTLFVLVVMTAASASG) are cleaved as a signal peptide. The propeptide occupies 23 to 30 (DALTEAKR). 3 disulfide bridges follow: Cys34–Cys41, Cys45–Cys53, and Cys54–Cys69.

Belongs to the conotoxin K superfamily. In terms of tissue distribution, expressed by the venom duct.

It localises to the secreted. In terms of biological role, probable neurotoxin. This chain is Conotoxin Im23.4, found in Conus imperialis (Imperial cone).